The primary structure comprises 80 residues: Pigment-dispersing hormone peptides (80 aa).

An N-terminal signal peptide occupies residues 1-20 (MANYITIAIIVGIVCGQALS). Residues 21-58 (VEDVDRNLLELNLPYGRGLDSELQLARLMLAAPRFCHP) constitute a propeptide that is removed on maturation. Ala-78 bears the Alanine amide mark.

The protein belongs to the arthropod PDH family. Expressed in the brain (at protein level).

It is found in the secreted. Functionally, neuropeptide PDF is the main transmitter regulating circadian locomotor rhythms. The sequence is that of Pigment-dispersing hormone peptides from Camponotus floridanus (Florida carpenter ant).